The following is a 769-amino-acid chain: Zinc finger protein 585B (769 aa).

Residues 1–12 (MPASWTSPQKSS) show a composition bias toward polar residues. Residues 1-23 (MPASWTSPQKSSALAPDDHGSSY) are disordered. Residues 27 to 97 (VSFRDVVINF…QGERPRHSCP (71 aa)) form the KRAB domain. 21 consecutive C2H2-type zinc fingers follow at residues 158-180 (YVCI…QKAH), 186-208 (YKCN…QRIH), 214-236 (YQCS…EKIH), 242-264 (HECT…QKIH), 270-292 (YICI…RRIH), 298-320 (YECN…QRIH), 354-376 (SICT…QRIH), 382-404 (YACS…QRIH), 410-432 (YVCM…QIIH), 438-460 (YKCG…KRIH), 466-488 (YVCN…QKTH), 494-516 (YICS…QRIH), 522-544 (YECN…QKIH), 550-572 (YECH…QKIH), 578-600 (YVCT…QRIH), 606-628 (YECS…QPLH), 634-656 (YVCA…QKTH), 662-684 (YICS…HRIH), 690-712 (YECS…QRIH), 718-740 (YVCA…QTTH), and 746-768 (YKCG…QGSH).

The protein belongs to the krueppel C2H2-type zinc-finger protein family.

It is found in the nucleus. Functionally, may be involved in transcriptional regulation. The polypeptide is Zinc finger protein 585B (ZNF585B) (Pongo abelii (Sumatran orangutan)).